The primary structure comprises 69 residues: Guanine nucleotide-binding protein G(I)/G(S)/G(O) subunit gamma-T2 (69 aa).

Position 66 is a cysteine methyl ester (Cys-66). Cys-66 is lipidated: S-farnesyl cysteine. Positions 67–69 (VLS) are cleaved as a propeptide — removed in mature form.

The protein belongs to the G protein gamma family. As to quaternary structure, g proteins are composed of 3 units, alpha, beta and gamma.

It localises to the cell membrane. Its function is as follows. Guanine nucleotide-binding proteins (G proteins) are involved as a modulator or transducer in various transmembrane signaling systems. The beta and gamma chains are required for the GTPase activity, for replacement of GDP by GTP, and for G protein-effector interaction. This is Guanine nucleotide-binding protein G(I)/G(S)/G(O) subunit gamma-T2 (Gngt2) from Mus musculus (Mouse).